A 639-amino-acid polypeptide reads, in one-letter code: Polyphenol oxidase, chloroplastic (639 aa).

The transit peptide at 1 to 101 (MATLSSPTII…EGANYYNTLA (101 aa)) directs the protein to the chloroplast. The disordered stretch occupies residues 35-58 (GVRSVNGKVSCQTKNNNGNDENNQ). 2 disulfide bridges follow: C111–C127 and C126–C194. Residues H193, H214, H223, H354, H358, and H388 each coordinate Cu cation. The 2'-(S-cysteinyl)-histidine (Cys-His) cross-link spans 197–214 (CDGSYPVLGHNDTRLEVH).

The protein belongs to the tyrosinase family. Requires Cu(2+) as cofactor.

It is found in the plastid. It localises to the chloroplast thylakoid lumen. The catalysed reaction is 2 catechol + O2 = 2 1,2-benzoquinone + 2 H2O. In terms of biological role, catalyzes the oxidation of mono- and o-diphenols to o-diquinones. The chain is Polyphenol oxidase, chloroplastic from Spinacia oleracea (Spinach).